We begin with the raw amino-acid sequence, 312 residues long: MFKSGSGSLKRSGSISSVKSFSGDSEKGLPPISRGSVSITSQNYEPLIVPANSSSFAAASDFVPEKTKSEGNLKNKSSVITGNFESSGPTNAHYNQNADGDRLVENLLLKEIAKGRGPSTSDARHTATDSRLSQEVKQPFSEENAGGNDLNTGRGSHGTGDGIEQYHKSDCEERMSAYHKRVVDTFFKYFEYSAEDGHSTLYSDVAFLFGCGDLDLLVMSRYQEVMTLRARSAIYGIFCYLQALTAYLTYLGAKVGQVIMLDEELEKYEIRLDVAQDDDPIVFQITTGVFTSGVAHDLRKLTQILEAFSLER.

A compositionally biased stretch (low complexity) spans 1–23 (MFKSGSGSLKRSGSISSVKSFSG). Disordered stretches follow at residues 1 to 37 (MFKS…RGSV), 63 to 97 (VPEK…YNQN), and 114 to 162 (KGRG…TGDG). Residues 63 to 73 (VPEKTKSEGNL) are compositionally biased toward basic and acidic residues. The span at 74–97 (KNKSSVITGNFESSGPTNAHYNQN) shows a compositional bias: polar residues. The span at 122–134 (DARHTATDSRLSQ) shows a compositional bias: basic and acidic residues.

This sequence belongs to the phytoreovirus non-structural protein Pns12A family.

It is found in the host cytoplasm. Constituent of viral factories. The chain is Non-structural protein 12A from Rice dwarf virus (isolate Fujian) (RDV).